The primary structure comprises 88 residues: Large ribosomal subunit protein bL27 (88 aa).

The interval Met1–Lys24 is disordered.

Belongs to the bacterial ribosomal protein bL27 family.

In Ehrlichia chaffeensis (strain ATCC CRL-10679 / Arkansas), this protein is Large ribosomal subunit protein bL27.